A 396-amino-acid chain; its full sequence is MAKTTKRASSFRRLMIFAIIALISLAFGVRYLFHNSNATDLQKILQNLPKEISQSINSANNIQSSDSDLVQHFESLAQEIRHQQEVQAKQFDKQRKILEKKIQDLKQTPPEATLRERIAMTFPYDSHVKFPAFIWQTWSNDEGPERVQDIKGMWESKNPGFAHEVLNHDVINALVHHYFYSIPEILETYEALPSIILKIDFFKYLILLVHGGVYADIDTFPVQPIPNWIPEELSPSDIGLIVGVEEDAQRADWRTKYIRRLQFGTWIIQAKPGHPVLREIISRIIETTLQRKRDDQLNVNLRNDLNIMSWTGSGLWTDTIFTYFNDFMRSGVREKVTWKLFHNLNQPKLLSDVLVFPKFSFNCPNQIDNDDPHKKFYFITHLASQFWKNTPKVEQK.

Residues 2–13 (AKTTKRASSFRR) are Cytoplasmic-facing. Residues 14 to 34 (LMIFAIIALISLAFGVRYLFH) traverse the membrane as a helical; Signal-anchor for type II membrane protein segment. Residues 35–396 (NSNATDLQKI…WKNTPKVEQK (362 aa)) lie on the Lumenal side of the membrane. An N-linked (GlcNAc...) asparagine glycan is attached at asparagine 37.

The protein belongs to the glycosyltransferase 32 family. Component of the M-Pol II complex composed of ANP1, MNN9, MNN10, MNN11 and HOC1.

The protein resides in the golgi apparatus. It localises to the cis-Golgi network membrane. Functionally, the M-Pol II complex possesses alpha-1,6-mannosyltransferase activity and is probably involved in the elongation of the mannan backbone of N-linked glycans on cell wall and periplasmic proteins. This Saccharomyces cerevisiae (strain ATCC 204508 / S288c) (Baker's yeast) protein is Putative glycosyltransferase HOC1 (HOC1).